Consider the following 822-residue polypeptide: Nuclear factor of activated T-cells, cytoplasmic 1 (822 aa).

The segment at 110–115 is calcineurin-binding; sequence PRIEIT. The tract at residues 118–210 is transactivation domain A (TAD-A); that stretch reads LGLHHNNGQF…CVSPKTTDPE (93 aa). A compositionally biased stretch (polar residues) spans 192-206; the sequence is PQTSPWQSPCVSPKT. The tract at residues 192–289 is disordered; that stretch reads PQTSPWQSPC…HSSPRVSVTD (98 aa). Tandem repeats lie at residues 195–211 and 225–241. The tract at residues 195–290 is 3 X SP repeats; it reads SPWQSPCVSP…SSPRVSVTDD (96 aa). Residues Ser-225 and Ser-229 each carry the phosphoserine modification. Over residues 225-242 the composition is skewed to low complexity; that stretch reads SPRHSPSTSPRTSVTEES. Phosphoserine; by PKA is present on Ser-237. The Nuclear localization signal signature appears at 257–259; sequence KRK. The stretch at 274–290 is repeat 3; the sequence is SPTPSPHSSPRVSVTDD. Position 286 is a phosphoserine; by PKA (Ser-286). Positions 302-313 match the Nuclear export signal motif; it reads SAIVAAINALST. Residues 400–582 enclose the RHD domain; that stretch reads PSLPALDWQL…NPIECSQRSA (183 aa). A DNA-binding region spans residues 429 to 436; sequence RAHYETEG. A Nuclear localization signal motif is present at residues 672-674; sequence KRK. A disordered region spans residues 772 to 822; that stretch reads GPGHLGLQRPAGGVLGGQEAPRPGGPHPGAPQLHPLNLSQSIVTRLTEPQP. The span at 808–822 shows a compositional bias: polar residues; it reads NLSQSIVTRLTEPQP.

Member of the multicomponent NFATC transcription complex that consists of at least two components, a pre-existing cytoplasmic component NFATC2 and an inducible nuclear component NFATC1. Other members such as NFATC4, NFATC3 or members of the activating protein-1 family, MAF, GATA4 and Cbp/p300 can also bind the complex. NFATC proteins bind to DNA as monomers. Interacts with HOMER2 and HOMER3; this interaction may compete with calcineurin/PPP3CA-binding and hence prevent NFATC1 dephosphorylation and activation. Interacts with TLE6/GRG6. Phosphorylated by NFATC-kinase and GSK3B; phosphorylation induces NFATC1 nuclear exit and dephosphorylation by calcineurin promotes nuclear import. Phosphorylation by PKA and DYRK2 negatively modulates nuclear accumulation, and promotes subsequent phosphorylation by GSK3B or casein kinase 1.

It localises to the cytoplasm. The protein localises to the nucleus. In terms of biological role, plays a role in the inducible expression of cytokine genes in T-cells, especially in the induction of the IL-2 or IL-4 gene transcription. Also controls gene expression in embryonic cardiac cells. Could regulate not only the activation and proliferation but also the differentiation and programmed death of T-lymphocytes as well as lymphoid and non-lymphoid cells. Required for osteoclastogenesis and regulates many genes important for osteoclast differentiation and function. This is Nuclear factor of activated T-cells, cytoplasmic 1 (NFATC1) from Sus scrofa (Pig).